Here is a 114-residue protein sequence, read N- to C-terminus: T cell receptor beta variable 6-5 (114 aa).

The N-terminal stretch at Met-1–Ala-21 is a signal peptide. The Ig-like domain maps to Gly-22–Tyr-114. A disulfide bridge links Cys-42 with Cys-110. The N-linked (GlcNAc...) asparagine glycan is linked to Asn-84.

Alpha-beta TR is a heterodimer composed of an alpha and beta chain; disulfide-linked. The alpha-beta TR is associated with the transmembrane signaling CD3 coreceptor proteins to form the TR-CD3 (TcR or TCR). The assembly of alpha-beta TR heterodimers with CD3 occurs in the endoplasmic reticulum where a single alpha-beta TR heterodimer associates with one CD3D-CD3E heterodimer, one CD3G-CD3E heterodimer and one CD247 homodimer forming a stable octameric structure. CD3D-CD3E and CD3G-CD3E heterodimers preferentially associate with TR alpha and TR beta chains, respectively. The association of the CD247 homodimer is the last step of TcR assembly in the endoplasmic reticulum and is required for transport to the cell surface.

Its subcellular location is the cell membrane. V region of the variable domain of T cell receptor (TR) beta chain that participates in the antigen recognition. Alpha-beta T cell receptors are antigen specific receptors which are essential to the immune response and are present on the cell surface of T lymphocytes. Recognize peptide-major histocompatibility (MH) (pMH) complexes that are displayed by antigen presenting cells (APC), a prerequisite for efficient T cell adaptive immunity against pathogens. Binding of alpha-beta TR to pMH complex initiates TR-CD3 clustering on the cell surface and intracellular activation of LCK that phosphorylates the ITAM motifs of CD3G, CD3D, CD3E and CD247 enabling the recruitment of ZAP70. In turn ZAP70 phosphorylates LAT, which recruits numerous signaling molecules to form the LAT signalosome. The LAT signalosome propagates signal branching to three major signaling pathways, the calcium, the mitogen-activated protein kinase (MAPK) kinase and the nuclear factor NF-kappa-B (NF-kB) pathways, leading to the mobilization of transcription factors that are critical for gene expression and essential for T cell growth and differentiation. The T cell repertoire is generated in the thymus, by V-(D)-J rearrangement. This repertoire is then shaped by intrathymic selection events to generate a peripheral T cell pool of self-MH restricted, non-autoaggressive T cells. Post-thymic interaction of alpha-beta TR with the pMH complexes shapes TR structural and functional avidity. This chain is T cell receptor beta variable 6-5, found in Homo sapiens (Human).